A 288-amino-acid chain; its full sequence is Ribosomal RNA small subunit methyltransferase A (288 aa).

S-adenosyl-L-methionine contacts are provided by N18, L20, G45, E66, D91, and N118.

The protein belongs to the class I-like SAM-binding methyltransferase superfamily. rRNA adenine N(6)-methyltransferase family. RsmA subfamily.

The protein resides in the cytoplasm. It catalyses the reaction adenosine(1518)/adenosine(1519) in 16S rRNA + 4 S-adenosyl-L-methionine = N(6)-dimethyladenosine(1518)/N(6)-dimethyladenosine(1519) in 16S rRNA + 4 S-adenosyl-L-homocysteine + 4 H(+). Specifically dimethylates two adjacent adenosines (A1518 and A1519) in the loop of a conserved hairpin near the 3'-end of 16S rRNA in the 30S particle. May play a critical role in biogenesis of 30S subunits. This chain is Ribosomal RNA small subunit methyltransferase A, found in Mannheimia succiniciproducens (strain KCTC 0769BP / MBEL55E).